A 248-amino-acid polypeptide reads, in one-letter code: NAD-dependent protein deacylase 2 (248 aa).

The Deacetylase sirtuin-type domain occupies M1–I248. Residues G19–Y38 and Q102–D105 contribute to the NAD(+) site. The active-site Proton acceptor is H122. The Zn(2+) site is built by C130, C133, C152, and C155. Residues G193 to T195, N219 to Q221, and A237 contribute to the NAD(+) site.

Belongs to the sirtuin family. Class III subfamily. Zn(2+) serves as cofactor.

It localises to the cytoplasm. It catalyses the reaction N(6)-acetyl-L-lysyl-[protein] + NAD(+) + H2O = 2''-O-acetyl-ADP-D-ribose + nicotinamide + L-lysyl-[protein]. NAD-dependent protein deacetylase which modulates the activities of several proteins which are inactive in their acetylated form. The polypeptide is NAD-dependent protein deacylase 2 (cobB2) (Pseudomonas syringae pv. tomato (strain ATCC BAA-871 / DC3000)).